Reading from the N-terminus, the 44-residue chain is pyr operon leader peptide (44 aa).

This chain is pyr operon leader peptide (pyrL), found in Escherichia coli O157:H7.